The primary structure comprises 147 residues: Transcriptional regulator MraZ (147 aa).

SpoVT-AbrB domains lie at 5–50 (AIAL…PLSA) and 79–122 (AQEE…SDAG).

The protein belongs to the MraZ family. Forms oligomers.

It is found in the cytoplasm. The protein localises to the nucleoid. This is Transcriptional regulator MraZ from Aromatoleum aromaticum (strain DSM 19018 / LMG 30748 / EbN1) (Azoarcus sp. (strain EbN1)).